The chain runs to 209 residues: uncharacterized protein (209 aa).

Positions 13–75 form a coiled coil; sequence LSAVDKQMDT…AINLAAVMTD (63 aa). Positions 107–135 are disordered; that stretch reads ATPLPSSNTNNEQSMSTYSSSISGKTSET. Residues 110–119 are compositionally biased toward polar residues; it reads LPSSNTNNEQ. Residues 120–133 show a composition bias toward low complexity; it reads SMSTYSSSISGKTS.

Belongs to the asfivirus K205R family.

It localises to the host cytoplasm. Induces host endoplasmic reticulum stress and consequently activates autophagy and NF-kappa-B signaling pathway. In turn, may induce autophagy-mediated STING1 degradation and innate immune evasion. This is an uncharacterized protein from Ornithodoros (relapsing fever ticks).